Here is a 970-residue protein sequence, read N- to C-terminus: Disks large 1 tumor suppressor protein (970 aa).

One can recognise an L27 domain in the interval 4–64 (KKQEAHRALE…FYELTLLDDS (61 aa)). The disordered stretch occupies residues 161–209 (TENAKEPTVEQQQKQQQAQQRSSRSPQQQNPQQQQGSKSRSGSQTVNGD). Positions 171–204 (QQQKQQQAQQRSSRSPQQQNPQQQQGSKSRSGSQ) are enriched in low complexity. PDZ domains follow at residues 216–303 (DIQL…KRKR) and 330–421 (EIDL…GKTQ). The segment at 424 to 477 (TTSASGGGGGGLSSGQQLSQSQSQLATSQSQSQVHQQQHATPMVNSQSTEPGSR) is disordered. The segment covering 437 to 462 (SGQQLSQSQSQLATSQSQSQVHQQQH) has biased composition (low complexity). Positions 466–477 (MVNSQSTEPGSR) are enriched in polar residues. Ser-496 is modified (phosphoserine). The region spanning 506 to 587 (TITIQKGPQG…VVTLLAQYRP (82 aa)) is the PDZ 3 domain. One can recognise an SH3 domain in the interval 620–690 (KRSLYVRALF…PSKRRWERKM (71 aa)). Thr-714 is modified (phosphothreonine). Positions 780-955 (TRPVIILGPL…IYSKVKSMIW (176 aa)) constitute a Guanylate kinase-like domain.

This sequence belongs to the MAGUK family. As to expression, during the cellular blastoderm stage, isoform B, isoform F, isoform H, isoform I and isoform L expression is localized to the cell borders. From stage 11 onwards, expression is found predominantly in the developing nervous system: axon bundles in the ventral cord and the brain. Stage 14 and 15 embryos exhibit expression in the developing body wall muscle. Expression in neuropil regions of the CNS and at NMJs persists through to larval development. Other isoforms show expression in embryonic epithelial cells. In larvae, expression is seen as a belt around salivary glands, imaginal disks and proventriculus. Expressed in adult reproductive tissues. In epithelia, coexpressed with scrib throughout development.

The protein localises to the cytoplasm. It is found in the cell membrane. The protein resides in the basolateral cell membrane. Its subcellular location is the cytoskeleton. It localises to the cell junction. The protein localises to the septate junction. During embryonic development, some isoforms are essential for proper neuronal differentiation and organization. Required for cell polarity; maintenance of apicobasal polarity. Plays a critical role at septate junctions in cellular growth control during larval development. The presence of a guanylate kinase domain suggests involvement in cellular adhesion as well as signal transduction to control cellular proliferation. The sequence is that of Disks large 1 tumor suppressor protein (dlg1) from Drosophila melanogaster (Fruit fly).